The primary structure comprises 793 residues: Protein translocase subunit SecA 2 (793 aa).

ATP is bound by residues Gln-77, 95-99, and Asp-493; that span reads GEGKT.

This sequence belongs to the SecA family. In terms of assembly, monomer and homodimer (Potential). Part of the accessory SecA2/SecY2 protein translocation apparatus required to export cell wall protein GspB.

The protein localises to the cell membrane. Its subcellular location is the cytoplasm. It catalyses the reaction ATP + H2O + cellular proteinSide 1 = ADP + phosphate + cellular proteinSide 2.. Functionally, part of the accessory SecA2/SecY2 system specifically required to export GspB, a serine-rich repeat cell wall protein encoded upstream in the same operon. The polypeptide is Protein translocase subunit SecA 2 (Streptococcus gordonii).